Here is a 384-residue protein sequence, read N- to C-terminus: Flap endonuclease 1 (384 aa).

The segment at Met1 to Arg105 is N-domain. Asp34 contacts Mg(2+). DNA-binding residues include Arg47 and Arg71. Asp87, Glu159, Glu161, Asp180, and Asp182 together coordinate Mg(2+). Residues Asp123–His254 are I-domain. Glu159 contributes to the DNA binding site. Residues Gly232 and Asp234 each coordinate DNA. Asp234 provides a ligand contact to Mg(2+). Positions Ile341 to Phe349 are interaction with PCNA. The disordered stretch occupies residues Lys354–Arg384. Positions Gly362–Gly375 are enriched in basic and acidic residues.

This sequence belongs to the XPG/RAD2 endonuclease family. FEN1 subfamily. In terms of assembly, interacts with PCNA. Three molecules of FEN1 bind to one PCNA trimer with each molecule binding to one PCNA monomer. PCNA stimulates the nuclease activity without altering cleavage specificity. Requires Mg(2+) as cofactor. Phosphorylated. Phosphorylation upon DNA damage induces relocalization to the nuclear plasma.

It localises to the nucleus. Its subcellular location is the nucleolus. The protein localises to the nucleoplasm. The protein resides in the mitochondrion. Its function is as follows. Structure-specific nuclease with 5'-flap endonuclease and 5'-3' exonuclease activities involved in DNA replication and repair. During DNA replication, cleaves the 5'-overhanging flap structure that is generated by displacement synthesis when DNA polymerase encounters the 5'-end of a downstream Okazaki fragment. It enters the flap from the 5'-end and then tracks to cleave the flap base, leaving a nick for ligation. Also involved in the long patch base excision repair (LP-BER) pathway, by cleaving within the apurinic/apyrimidinic (AP) site-terminated flap. Acts as a genome stabilization factor that prevents flaps from equilibrating into structures that lead to duplications and deletions. Also possesses 5'-3' exonuclease activity on nicked or gapped double-stranded DNA, and exhibits RNase H activity. Also involved in replication and repair of rDNA and in repairing mitochondrial DNA. This is Flap endonuclease 1 from Lodderomyces elongisporus (strain ATCC 11503 / CBS 2605 / JCM 1781 / NBRC 1676 / NRRL YB-4239) (Yeast).